A 285-amino-acid chain; its full sequence is Nucleotide-binding protein NTHI1314 (285 aa).

Gly8–Ser15 is a binding site for ATP. Asp56 to Asn59 serves as a coordination point for GTP.

It belongs to the RapZ-like family.

Functionally, displays ATPase and GTPase activities. The protein is Nucleotide-binding protein NTHI1314 of Haemophilus influenzae (strain 86-028NP).